A 219-amino-acid polypeptide reads, in one-letter code: MCPARSLLLVATLVLLDHLSLARNLPVATPDPGMFPCLHHSQNLLRAVSNMLQKARQTLEFYPCTSEEIDHEDITKDKTSTVEACLPLELTKNESCLNSRETSFITNGSCLASRKTSFMMALCLSSIYEDLKMYQVEFKTMNAKLLMDPKRQIFLDQNMLAVIDELMQALNFNSETVPQKSSLEEPDFYKTKIKLCILLHAFRIRAVTIDRVMSYLNAS.

The first 22 residues, 1–22 (MCPARSLLLVATLVLLDHLSLA), serve as a signal peptide directing secretion. Disulfide bonds link C37/C110, C64/C196, and C85/C123. N-linked (GlcNAc...) asparagine glycosylation is found at N93 and N107.

It belongs to the IL-6 superfamily. Heterodimer with IL12B; disulfide-linked. This heterodimer is known as interleukin IL-12. Heterodimer with EBI3/IL27B; not disulfide-linked. This heterodimer is known as interleukin IL-35. Interacts with NBR1; this interaction promotes IL-12 secretion.

The protein localises to the secreted. Heterodimerizes with IL12B to form the IL-12 cytokine or with EBI3/IL27B to form the IL-35 cytokine. IL-12 is primarily produced by professional antigen-presenting cells (APCs) such as B-cells and dendritic cells (DCs) as well as macrophages and granulocytes and regulates T-cell and natural killer-cell responses, induces the production of interferon-gamma (IFN-gamma), favors the differentiation of T-helper 1 (Th1) cells and is an important link between innate resistance and adaptive immunity. Mechanistically, exerts its biological effects through a receptor composed of IL12R1 and IL12R2 subunits. Binding to the receptor results in the rapid tyrosine phosphorylation of a number of cellular substrates including the JAK family kinases TYK2 and JAK2. In turn, recruited STAT4 gets phosphorylated and translocates to the nucleus where it regulates cytokine/growth factor responsive genes. As part of IL-35, plays essential roles in maintaining the immune homeostasis of the liver microenvironment and also functions as an immune-suppressive cytokine. Mediates biological events through unconventional receptors composed of IL12RB2 and gp130/IL6ST heterodimers or homodimers. Signaling requires the transcription factors STAT1 and STAT4, which form a unique heterodimer that binds to distinct DNA sites. This Homo sapiens (Human) protein is Interleukin-12 subunit alpha (IL12A).